The chain runs to 168 residues: Photosystem I assembly protein Ycf3 (168 aa).

TPR repeat units lie at residues 35 to 68, 72 to 105, and 120 to 153; these read AFTY…EIDP, SYIL…NPFL, and GEQA…TPGN.

Belongs to the Ycf3 family.

The protein localises to the plastid. It is found in the chloroplast thylakoid membrane. Essential for the assembly of the photosystem I (PSI) complex. May act as a chaperone-like factor to guide the assembly of the PSI subunits. The sequence is that of Photosystem I assembly protein Ycf3 from Illicium oligandrum (Star anise).